The sequence spans 466 residues: Coagulation factor IX (466 aa).

Residues 1 to 25 (MRCLNMIMAEPPGLITICLLGYLLG) form the signal peptide. A propeptide spanning residues 26-46 (ADCTVFLDHEDATKVLSRPKR) is cleaved from the precursor. Ca(2+)-binding residues include tyrosine 47, asparagine 48, glutamate 53, glutamate 54, glutamate 61, glutamate 63, glutamate 66, glutamate 67, glutamate 72, glutamate 73, and glutamate 76. One can recognise a Gla domain in the interval 47 to 92 (YNSGKLEEFVQGNLERECMEEKCSFEEAREVFENTEKTTEFWKQYV). 4-carboxyglutamate is present on residues glutamate 53, glutamate 54, glutamate 61, glutamate 63, glutamate 66, glutamate 67, glutamate 72, glutamate 73, glutamate 76, glutamate 79, and glutamate 82. Glutamate 61 lines the Mg(2+) pocket. Cysteine 64 and cysteine 69 are joined by a disulfide. Glutamate 66 is a binding site for Mg(2+). A Mg(2+)-binding site is contributed by glutamate 72. Mg(2+) is bound at residue glutamate 76. Glutamate 82 contacts Ca(2+). Residue glutamate 82 participates in Mg(2+) binding. Threonine 85 carries an O-linked (GalNAc...) threonine glycan. Positions 86, 93, 94, and 96 each coordinate Ca(2+). The residue at position 86 (glutamate 86) is a 4-carboxyglutamate. Glutamate 86 contributes to the Mg(2+) binding site. The EGF-like 1; calcium-binding domain maps to 93 to 129 (DGDQCESNPCLNGGICKDDINSYECWCQTGFEGKNCE). Disulfide bonds link cysteine 97/cysteine 108, cysteine 102/cysteine 117, cysteine 119/cysteine 128, cysteine 134/cysteine 145, cysteine 141/cysteine 155, cysteine 157/cysteine 170, cysteine 178/cysteine 340, cysteine 257/cysteine 273, cysteine 387/cysteine 401, and cysteine 412/cysteine 440. Serine 99 is a glycosylation site (O-linked (Glc...) serine). The Ca(2+) site is built by aspartate 110 and aspartate 111. (3R)-3-hydroxyaspartate is present on aspartate 110. At serine 114 the chain carries Phosphoserine. One can recognise an EGF-like 2 domain in the interval 130–171 (LDVTCNIKNGRCKQFCKLDADNKVVCSCTTGYQLAEDQKSCE). A propeptide spans 193–231 (AETLFLNMDYENSTTDYENSAEAEKNVDNVTQPLNDLTR) (activation peptide). Tyrosine 202 is modified (sulfotyrosine). Serine 205 is subject to Phosphoserine. Threonine 206 bears the Phosphothreonine; alternate mark. Threonine 206 carries an O-linked (GalNAc...) threonine; alternate glycan. The N-linked (GlcNAc...) asparagine glycan is linked to asparagine 221. Residues threonine 223 and threonine 230 are each glycosylated (O-linked (GalNAc...) threonine). Positions 232–464 (IVGGKTAKPG…YVNWIKEKTK (233 aa)) constitute a Peptidase S1 domain. Catalysis depends on histidine 272, which acts as the Charge relay system. 5 residues coordinate Ca(2+): glutamate 286, asparagine 288, glutamate 291, glutamate 293, and glutamate 296. Catalysis depends on aspartate 320, which acts as the Charge relay system. Serine 416 functions as the Charge relay system in the catalytic mechanism.

Belongs to the peptidase S1 family. Heterodimer of a light chain and a heavy chain; disulfide-linked. Interacts (inactive and activated) with F11 (activated) in calcium-dependent manner. Interacts with SERPINC1. The iron and 2-oxoglutarate dependent 3-hydroxylation of aspartate and asparagine is (R) stereospecific within EGF domains. In terms of processing, activated by factor XIa, which excises the activation peptide. The propeptide can also be removed by snake venom protease. Activated by coagulation factor VIIa-tissue factor (F7-F3) complex in calcium-dependent manner. Post-translationally, predominantly O-glucosylated at Ser-99 by POGLUT1 in vitro.

The protein resides in the secreted. It carries out the reaction Selective cleavage of Arg-|-Ile bond in factor X to form factor Xa.. Factor IX is a vitamin K-dependent plasma protein that participates in the intrinsic pathway of blood coagulation by converting factor X to its active form in the presence of Ca(2+) ions, phospholipids, and factor VIIIa. In Felis catus (Cat), this protein is Coagulation factor IX (F9).